We begin with the raw amino-acid sequence, 249 residues long: 3-deoxy-manno-octulosonate cytidylyltransferase (249 aa).

It belongs to the KdsB family.

The protein resides in the cytoplasm. The catalysed reaction is 3-deoxy-alpha-D-manno-oct-2-ulosonate + CTP = CMP-3-deoxy-beta-D-manno-octulosonate + diphosphate. The protein operates within nucleotide-sugar biosynthesis; CMP-3-deoxy-D-manno-octulosonate biosynthesis; CMP-3-deoxy-D-manno-octulosonate from 3-deoxy-D-manno-octulosonate and CTP: step 1/1. It functions in the pathway bacterial outer membrane biogenesis; lipopolysaccharide biosynthesis. Functionally, activates KDO (a required 8-carbon sugar) for incorporation into bacterial lipopolysaccharide in Gram-negative bacteria. The polypeptide is 3-deoxy-manno-octulosonate cytidylyltransferase (Oleidesulfovibrio alaskensis (strain ATCC BAA-1058 / DSM 17464 / G20) (Desulfovibrio alaskensis)).